We begin with the raw amino-acid sequence, 337 residues long: Deoxyhypusine hydroxylase (337 aa).

HEAT-like PBS-type repeat units follow at residues 73–99 and 106–132; these read LKHELAYCLGQTGNTAAVKPLRQVLSD and CRHEAAEALGALGWADNLDILREYRDR. Histidine 75, glutamate 76, histidine 108, and glutamate 109 together coordinate Fe cation. Residues 156–165 show a composition bias toward basic and acidic residues; that stretch reads AERQKEKLRP. A disordered region spans residues 156 to 183; the sequence is AERQKEKLRPSDFASIDPAPPMPESDKE. 3 HEAT-like PBS-type repeats span residues 202–235, 240–266, and 273–300; these read SRYRAMFALRDLASPPDLPTATPAVLALAKGLSD, FRHEIAFVFGQLSHPASIPALTEALSN, and VRHEAAEALGSLGEKDGVEDTLRKFLHD. Fe cation is bound by residues histidine 242, glutamate 243, histidine 275, and glutamate 276.

Belongs to the deoxyhypusine hydroxylase family. The cofactor is Fe(2+).

The protein localises to the cytoplasm. Its subcellular location is the nucleus. The enzyme catalyses [eIF5A protein]-deoxyhypusine + AH2 + O2 = [eIF5A protein]-hypusine + A + H2O. The protein operates within protein modification; eIF5A hypusination. Catalyzes the hydroxylation of the N(6)-(4-aminobutyl)-L-lysine intermediate to form hypusine, an essential post-translational modification only found in mature eIF-5A factor. This chain is Deoxyhypusine hydroxylase, found in Gibberella zeae (strain ATCC MYA-4620 / CBS 123657 / FGSC 9075 / NRRL 31084 / PH-1) (Wheat head blight fungus).